Consider the following 180-residue polypeptide: ATP-dependent protease subunit HslV (180 aa).

Residue Thr-6 is part of the active site. Na(+) contacts are provided by Ala-164, Cys-167, and Thr-170.

The protein belongs to the peptidase T1B family. HslV subfamily. A double ring-shaped homohexamer of HslV is capped on each side by a ring-shaped HslU homohexamer. The assembly of the HslU/HslV complex is dependent on binding of ATP.

The protein resides in the cytoplasm. The catalysed reaction is ATP-dependent cleavage of peptide bonds with broad specificity.. Its activity is regulated as follows. Allosterically activated by HslU binding. Protease subunit of a proteasome-like degradation complex believed to be a general protein degrading machinery. This is ATP-dependent protease subunit HslV from Borrelia recurrentis (strain A1).